Reading from the N-terminus, the 366-residue chain is Dual-specificity RNA methyltransferase RlmN (366 aa).

The Proton acceptor role is filled by Glu-91. The Radical SAM core domain occupies 97–333 (EDDRGTLCVS…TTVRKTRGED (237 aa)). Residues Cys-104 and Cys-338 are joined by a disulfide bond. [4Fe-4S] cluster contacts are provided by Cys-111, Cys-115, and Cys-118. Residues 164 to 165 (GE), Ser-196, 218 to 220 (SLH), and Asn-295 each bind S-adenosyl-L-methionine. Cys-338 serves as the catalytic S-methylcysteine intermediate.

It belongs to the radical SAM superfamily. RlmN family. [4Fe-4S] cluster is required as a cofactor.

Its subcellular location is the cytoplasm. The enzyme catalyses adenosine(2503) in 23S rRNA + 2 reduced [2Fe-2S]-[ferredoxin] + 2 S-adenosyl-L-methionine = 2-methyladenosine(2503) in 23S rRNA + 5'-deoxyadenosine + L-methionine + 2 oxidized [2Fe-2S]-[ferredoxin] + S-adenosyl-L-homocysteine. It carries out the reaction adenosine(37) in tRNA + 2 reduced [2Fe-2S]-[ferredoxin] + 2 S-adenosyl-L-methionine = 2-methyladenosine(37) in tRNA + 5'-deoxyadenosine + L-methionine + 2 oxidized [2Fe-2S]-[ferredoxin] + S-adenosyl-L-homocysteine. In terms of biological role, specifically methylates position 2 of adenine 2503 in 23S rRNA and position 2 of adenine 37 in tRNAs. m2A2503 modification seems to play a crucial role in the proofreading step occurring at the peptidyl transferase center and thus would serve to optimize ribosomal fidelity. The polypeptide is Dual-specificity RNA methyltransferase RlmN (Laribacter hongkongensis (strain HLHK9)).